The chain runs to 258 residues: Lyso-ornithine lipid O-acyltransferase (258 aa).

A helical membrane pass occupies residues L7 to L29.

Belongs to the 1-acyl-sn-glycerol-3-phosphate acyltransferase family. OlsA subfamily.

The protein resides in the membrane. The enzyme catalyses a lyso-ornithine lipid + a fatty acyl-[ACP] = an N(2)-[(3R)-3-(acyloxy)acyl]-L-ornithine lipid + holo-[ACP]. It functions in the pathway lipid metabolism. Its function is as follows. Catalyzes the second step in the formation of ornithine lipids, which are phosphorus-free membrane lipids. Uses acyl-acyl carrier protein (acyl-AcpP) as an acyl donor and converts lyso-ornithine lipid (LOL) into ornithine lipid (OL). The polypeptide is Lyso-ornithine lipid O-acyltransferase (Pseudomonas aeruginosa (strain ATCC 15692 / DSM 22644 / CIP 104116 / JCM 14847 / LMG 12228 / 1C / PRS 101 / PAO1)).